A 170-amino-acid polypeptide reads, in one-letter code: uncharacterized protein (170 aa).

A helical membrane pass occupies residues 96 to 116; sequence FSAISIGSFPIVLFLSLFFFD.

It localises to the membrane. This is an uncharacterized protein from Borreliella burgdorferi (strain ATCC 35210 / DSM 4680 / CIP 102532 / B31) (Borrelia burgdorferi).